Reading from the N-terminus, the 214-residue chain is NADH-ubiquinone oxidoreductase chain 5 (214 aa).

A run of 4 helical transmembrane segments spans residues 14–34 (LNTW…TYSI), 58–78 (PLIT…GMII), 92–112 (MPLI…ILAL), and 192–212 (TGLI…MILM).

The protein belongs to the complex I subunit 5 family.

It is found in the mitochondrion inner membrane. The catalysed reaction is a ubiquinone + NADH + 5 H(+)(in) = a ubiquinol + NAD(+) + 4 H(+)(out). Its function is as follows. Core subunit of the mitochondrial membrane respiratory chain NADH dehydrogenase (Complex I) that is believed to belong to the minimal assembly required for catalysis. Complex I functions in the transfer of electrons from NADH to the respiratory chain. The immediate electron acceptor for the enzyme is believed to be ubiquinone. In Anser caerulescens (Snow goose), this protein is NADH-ubiquinone oxidoreductase chain 5 (MT-ND5).